We begin with the raw amino-acid sequence, 258 residues long: Chaperone protein FaeE (258 aa).

A signal peptide spans 1-34 (MSKRNAVTTFFTNRVTKALGMTLALMMTCQSAMA). Positions 239–258 (KKPAAPEAAKAEKADTAEQK) are disordered. Residues 247-258 (AKAEKADTAEQK) show a composition bias toward basic and acidic residues.

This sequence belongs to the periplasmic pilus chaperone family.

It localises to the periplasm. Functionally, mediates assembly of pili by forming soluble multimeric complexes with pili subunits as an intermediate step in the assembly process. This protein is involved in K88 pili assembly. Protects pilin protein from proteolytic degradation by DegP and from premature polymerization. This is Chaperone protein FaeE (faeE) from Escherichia coli.